The following is a 1193-amino-acid chain: DNA polymerase III subunit alpha (1193 aa).

It belongs to the DNA polymerase type-C family. DnaE subfamily. DNA polymerase III contains a core (composed of alpha, epsilon and theta chains) that associates with a tau subunit. This core dimerizes to form the PolIII' complex. PolIII' associates with the gamma complex (composed of gamma, delta, delta', psi and chi chains) and with the beta chain to form the complete DNA polymerase III complex.

The protein resides in the cytoplasm. The enzyme catalyses DNA(n) + a 2'-deoxyribonucleoside 5'-triphosphate = DNA(n+1) + diphosphate. Its function is as follows. DNA polymerase III is a complex, multichain enzyme responsible for most of the replicative synthesis in bacteria. This DNA polymerase also exhibits 3' to 5' exonuclease activity. The alpha chain is the DNA polymerase. This chain is DNA polymerase III subunit alpha (dnaE), found in Xylella fastidiosa (strain Temecula1 / ATCC 700964).